The sequence spans 456 residues: Chromosomal replication initiator protein DnaA (456 aa).

The segment at 1–83 (MTASLWQQCL…LRFDIGNRPH (83 aa)) is domain I, interacts with DnaA modulators. A domain II region spans residues 83–119 (HPVAVARAPARGADPVNNSQKSWESKAEAKPEPNHKS). A disordered region spans residues 92 to 122 (ARGADPVNNSQKSWESKAEAKPEPNHKSNTN). A compositionally biased stretch (basic and acidic residues) spans 105–117 (WESKAEAKPEPNH). The interval 120-336 (NTNVNYTFEN…GALNRVIANA (217 aa)) is domain III, AAA+ region. Residues G164, G166, K167, and T168 each contribute to the ATP site. The domain IV, binds dsDNA stretch occupies residues 337 to 456 (NFTGRAINID…YSNLIRTLSS (120 aa)).

It belongs to the DnaA family. As to quaternary structure, oligomerizes as a right-handed, spiral filament on DNA at oriC.

Its subcellular location is the cytoplasm. Its function is as follows. Plays an essential role in the initiation and regulation of chromosomal replication. ATP-DnaA binds to the origin of replication (oriC) to initiate formation of the DNA replication initiation complex once per cell cycle. Binds the DnaA box (a 9 base pair repeat at the origin) and separates the double-stranded (ds)DNA. Forms a right-handed helical filament on oriC DNA; dsDNA binds to the exterior of the filament while single-stranded (ss)DNA is stabiized in the filament's interior. The ATP-DnaA-oriC complex binds and stabilizes one strand of the AT-rich DNA unwinding element (DUE), permitting loading of DNA polymerase. After initiation quickly degrades to an ADP-DnaA complex that is not apt for DNA replication. Binds acidic phospholipids. The polypeptide is Chromosomal replication initiator protein DnaA (Aeromonas hydrophila subsp. hydrophila (strain ATCC 7966 / DSM 30187 / BCRC 13018 / CCUG 14551 / JCM 1027 / KCTC 2358 / NCIMB 9240 / NCTC 8049)).